A 349-amino-acid chain; its full sequence is Thiamine thiazole synthase, chloroplastic (349 aa).

The N-terminal 45 residues, 1 to 45 (MAAIASTLSLSSTKPQRLFDSSFHGSAISAAPISIGLKPRSFSVR), are a transit peptide targeting the chloroplast. Residues Ala-94, 114 to 115 (EQ), Gly-122, and Ala-187 contribute to the substrate site. A 2,3-didehydroalanine (Cys) modification is found at Cys-216. Substrate is bound by residues Asp-218, His-233, Met-285, and 295-297 (RMG).

Belongs to the THI4 family. As to quaternary structure, homooctamer. Interacts with RBCX1 and RBCX1. Interacts with CPK33. It depends on Fe cation as a cofactor. Post-translationally, during the catalytic reaction, a sulfide is transferred from Cys-216 to a reaction intermediate, generating a dehydroalanine residue. Not phosphorylated in vitro by CPK33. In terms of tissue distribution, expressed at high levels in chloroplast-containing parenchymatic cells of leaves, inflorescence shoots and flowers, and at lower levels in the vascular system. In young plants, detected in roots and shoots including cotyledons, leaves and hypocotyls. Also observed in apical meristematic regions, siliques and embryos. Low expression in roots, limited to the vascular tissue. Broadly expressed in roots, cotyledons, leaves, hypocotyls, inflorescences, siliques, and strongly in guard cells.

It is found in the plastid. It localises to the chloroplast. Its subcellular location is the mitochondrion. The protein resides in the cell membrane. It catalyses the reaction [ADP-thiazole synthase]-L-cysteine + glycine + NAD(+) = [ADP-thiazole synthase]-dehydroalanine + ADP-5-ethyl-4-methylthiazole-2-carboxylate + nicotinamide + 3 H2O + 2 H(+). Functionally, involved in biosynthesis of the thiamine precursor thiazole. Catalyzes the conversion of NAD and glycine to adenosine diphosphate 5-(2-hydroxyethyl)-4-methylthiazole-2-carboxylic acid (ADT), an adenylated thiazole intermediate. The reaction includes an iron-dependent sulfide transfer from a conserved cysteine residue of the protein to a thiazole intermediate. The enzyme can only undergo a single turnover, which suggests it is a suicide enzyme. May have additional roles in adaptation to various stress conditions and in DNA damage tolerance. Acts as a positive regulator for the abscisic acid-induced activation of slow type anion channels during stomatal closure by repressing CPK33 kinase activity. The polypeptide is Thiamine thiazole synthase, chloroplastic (Arabidopsis thaliana (Mouse-ear cress)).